The primary structure comprises 470 residues: Glucose-1-phosphate adenylyltransferase (470 aa).

Residues Gly165, 182-183 (EK), and Ser200 each bind alpha-D-glucose 1-phosphate.

This sequence belongs to the bacterial/plant glucose-1-phosphate adenylyltransferase family. Homotetramer.

It carries out the reaction alpha-D-glucose 1-phosphate + ATP + H(+) = ADP-alpha-D-glucose + diphosphate. The protein operates within glycan biosynthesis; glycogen biosynthesis. Its function is as follows. Involved in the biosynthesis of ADP-glucose, a building block required for the elongation reactions to produce glycogen. Catalyzes the reaction between ATP and alpha-D-glucose 1-phosphate (G1P) to produce pyrophosphate and ADP-Glc. The chain is Glucose-1-phosphate adenylyltransferase from Paenarthrobacter aurescens (strain TC1).